An 822-amino-acid chain; its full sequence is Epidermal growth factor receptor kinase substrate 8 (822 aa).

2 stretches are compositionally biased toward polar residues: residues 1-10 and 17-30; these read MNGHISNHPS and SQMNGYGSSPTFSQ. Residues 1–39 form a disordered region; that stretch reads MNGHISNHPSSFGMYPSQMNGYGSSPTFSQTDREHGSKT. The residue at position 58 (Ser-58) is a Phosphoserine. One can recognise a PTB domain in the interval 64-194; it reads QYRVEHLTTF…SDSKGGKQKR (131 aa). Disordered stretches follow at residues 202–225 and 298–320; these read ISNADPSIPPPPRAPAPAPPGTVT and SKRKKNKKGKRKGPGEGVLTLRA. Over residues 208 to 221 the composition is skewed to pro residues; sequence SIPPPPRAPAPAPP. Thr-223 bears the Phosphothreonine mark. The span at 299–309 shows a compositional bias: basic residues; the sequence is KRKKNKKGKRK. Position 317 is a phosphothreonine (Thr-317). Ser-476 carries the post-translational modification Phosphoserine. The SH3 domain maps to 531-590; the sequence is QPKKYAKSKYDFVARNNSELSVLKDDILEILDDRKQWWKVRNASGDSGFVPNNILDIVRP. Residues 612 to 689 are disordered; sequence EYGPRPADTP…VDRRKSQMEE (78 aa). Residues 618-645 show a composition bias toward pro residues; it reads ADTPPAPSPPPTPAPVPVPLPPSTPAPV. The residue at position 625 (Ser-625) is a Phosphoserine. Thr-629 carries the phosphothreonine; by MAPK modification. An effector region region spans residues 649 to 822; sequence KVPANITRQN…VESFDEGSSH (174 aa). Residues Ser-659, Ser-662, and Ser-685 each carry the phosphoserine modification. A compositionally biased stretch (basic and acidic residues) spans 671–687; it reads DSQRHKQLPVDRRKSQM. The interval 680-698 is amphipathic helix; sequence VDRRKSQMEEVQDELIHRL. 4 helix bundle regions span residues 718 to 738, 752 to 757, 762 to 767, and 766 to 785; these read VINITYDSTPEDVKTWLQSKG, GAQLFS, ELRTVC, and VCPEGARVYSQITVQKAALE. Positions 787–822 are disordered; it reads SSGSSELQEIMRRRQEKISAAASDSGVESFDEGSSH. Residues Ser-811 and Ser-815 each carry the phosphoserine modification.

The protein belongs to the EPS8 family. Homodimer. Part of a complex consisting of ABI1, EPS8 and SOS1. Interacts with MYO15A and WHRN. Interacts with LANCL1. Interacts with EGFR; mediates EPS8 phosphorylation. Interacts with BAIAP2. Interacts with SHB. Ubiquitinated by the SCF(FBXW5) E3 ubiquitin-protein ligase complex during G2 phase, leading to its transient degradation and subsequent cell shape changes required to allow mitotic progression. Reappears at the midzone of dividing cells. In terms of processing, phosphorylation at Ser-625 and Thr-629 by MAPK following BDNF treatment promotes removal from actin and filopodia formation. Phosphorylated by several receptor tyrosine kinases. Expressed in all tissues analyzed, including heart, brain, placenta, lung, liver, skeletal muscle, kidney and pancreas. Expressed in all epithelial and fibroblastic lines examined and in some, but not all, hematopoietic cells.

Its subcellular location is the cytoplasm. It localises to the cell cortex. It is found in the cell projection. The protein resides in the ruffle membrane. The protein localises to the growth cone. Its subcellular location is the stereocilium. It localises to the synapse. It is found in the synaptosome. Functionally, signaling adapter that controls various cellular protrusions by regulating actin cytoskeleton dynamics and architecture. Depending on its association with other signal transducers, can regulate different processes. Together with SOS1 and ABI1, forms a trimeric complex that participates in transduction of signals from Ras to Rac by activating the Rac-specific guanine nucleotide exchange factor (GEF) activity. Acts as a direct regulator of actin dynamics by binding actin filaments and has both barbed-end actin filament capping and actin bundling activities depending on the context. Displays barbed-end actin capping activity when associated with ABI1, thereby regulating actin-based motility process: capping activity is auto-inhibited and inhibition is relieved upon ABI1 interaction. Also shows actin bundling activity when associated with BAIAP2, enhancing BAIAP2-dependent membrane extensions and promoting filopodial protrusions. Involved in the regulation of processes such as axonal filopodia growth, stereocilia length, dendritic cell migration and cancer cell migration and invasion. Acts as a regulator of axonal filopodia formation in neurons: in the absence of neurotrophic factors, negatively regulates axonal filopodia formation via actin-capping activity. In contrast, it is phosphorylated in the presence of BDNF leading to inhibition of its actin-capping activity and stimulation of filopodia formation. Component of a complex with WHRN and MYO15A that localizes at stereocilia tips and is required for elongation of the stereocilia actin core. Indirectly involved in cell cycle progression; its degradation following ubiquitination being required during G2 phase to promote cell shape changes. The chain is Epidermal growth factor receptor kinase substrate 8 (EPS8) from Homo sapiens (Human).